We begin with the raw amino-acid sequence, 411 residues long: Efflux pump periplasmic linker BepF (411 aa).

Residues 118–196 adopt a coiled-coil conformation; sequence FVLQKDALQA…SLEQAQINLG (79 aa).

This sequence belongs to the membrane fusion protein (MFP) (TC 8.A.1) family. In terms of assembly, probably part of a tripartite efflux pump, which is composed of an outer membrane efflux protein, an inner membrane protein and a protein that expands the periplasmic space. Could form a tripartite pump with BepC and BepG.

The protein localises to the periplasm. Functionally, may contribute to resistance to some drugs, such as deoxycholate, sodium dodecyl sulfate and nalidixic acid, in the absence of BepD and BepE. The sequence is that of Efflux pump periplasmic linker BepF (bepF) from Brucella suis biovar 1 (strain 1330).